We begin with the raw amino-acid sequence, 155 residues long: Probable methanogenesis regulatory protein FilR2 (155 aa).

Residues 18-142 (IILLVEDNNA…DLKRTVEEIK (125 aa)) enclose the Response regulatory domain. Aspartate 75 carries the post-translational modification 4-aspartylphosphate.

In terms of processing, phosphorylated by FilI.

Member of the two-component regulatory system FilI/FilRs, which is involved in the regulation of methanogenesis. This chain is Probable methanogenesis regulatory protein FilR2, found in Methanothrix harundinacea (strain 6Ac) (Methanosaeta harundinacea).